A 497-amino-acid chain; its full sequence is Penton protein (497 aa).

The Cell attachment site signature appears at 293 to 295 (RGD).

Belongs to the adenoviridae penton family. In terms of assembly, interacts (via the cell attachment site RGD) with host heterodimer ITGAV-ITGB5; this interaction promotes virus internalization. Interacts with host WWP1 and WWP2. Interacts with the fiber protein (via N-terminal tail region). Interacts with the capsid vertex protein; this interaction binds the penton base to neighboring peripentonal hexons.

The protein localises to the virion. It is found in the host nucleus. In terms of biological role, major capsid protein that self-associates to form penton base pentamers, each in the shape of a pentagon, situated at the 12 vertices of the pseudo T=25 capsid. Involved in virus secondary attachment to host cell after initial attachment by the fiber protein. Binds host integrin heterodimer ITGAV-ITGB5 (alphaV-beta5) thereby triggering clathrin-mediated endocytosis of virions. Mediates initial virus attachment to CXADR-negative cells. Binding to integrins ITGAV-ITGB5 also seems to induce macropinocytosis uptake of the virus. As the virus enters the host cell, penton proteins are shed concomitant with virion acidification in the endosome. This chain is Penton protein, found in Human adenovirus A serotype 12 (HAdV-12).